The sequence spans 475 residues: Tetratricopeptide repeat protein 29 (475 aa).

TPR repeat units lie at residues 92–131, 136–173, 182–215, 234–267, 274–307, 314–347, and 354–387; these read DALR…EDAE, FEDV…AQLI, AEAH…TQGR, LRTY…AKEG, AEAS…STDL, GRGY…ARNN, and VRAS…TVEL. The tract at residues 437–475 is disordered; the sequence is IEPDPVTEEFRGSTVEAVSQNSERLEELSRFPGDQKNET. A compositionally biased stretch (basic and acidic residues) spans 459–475; sequence ERLEELSRFPGDQKNET.

As to expression, expressed in spermatozoa (at protein level).

Its subcellular location is the cytoplasm. It localises to the cytoskeleton. The protein localises to the flagellum axoneme. Axonemal protein which is implicated in axonemal and/or peri-axonemal structure assembly and regulates flagellum assembly and beating and therefore sperm motility. This Homo sapiens (Human) protein is Tetratricopeptide repeat protein 29 (TTC29).